The sequence spans 337 residues: Fructose-1,6-bisphosphatase class 1 (337 aa).

Residues Glu89, Asp112, Leu114, and Asp115 each contribute to the Mg(2+) site. Residues 115 to 118 (DGSS), Asn208, Tyr241, and Lys271 each bind substrate. Glu277 is a Mg(2+) binding site.

It belongs to the FBPase class 1 family. In terms of assembly, homotetramer. It depends on Mg(2+) as a cofactor.

It localises to the cytoplasm. The catalysed reaction is beta-D-fructose 1,6-bisphosphate + H2O = beta-D-fructose 6-phosphate + phosphate. The protein operates within carbohydrate biosynthesis; gluconeogenesis. The polypeptide is Fructose-1,6-bisphosphatase class 1 (Yersinia pestis bv. Antiqua (strain Antiqua)).